The following is a 363-amino-acid chain: NAD(P)H-quinone oxidoreductase subunit 1, chloroplastic (363 aa).

Transmembrane regions (helical) follow at residues 30–50 (LVPI…IVWL), 98–118 (FSIG…VIPF), 127–147 (LSIG…GLLM), 165–185 (AAQS…ISLL), 203–223 (FWGW…ISSL), 248–268 (YSGI…LVSS), 300–320 (VFGT…FLFI), and 336–356 (LLNL…LLTT).

This sequence belongs to the complex I subunit 1 family. As to quaternary structure, NDH is composed of at least 16 different subunits, 5 of which are encoded in the nucleus.

The protein resides in the plastid. The protein localises to the chloroplast thylakoid membrane. The enzyme catalyses a plastoquinone + NADH + (n+1) H(+)(in) = a plastoquinol + NAD(+) + n H(+)(out). It catalyses the reaction a plastoquinone + NADPH + (n+1) H(+)(in) = a plastoquinol + NADP(+) + n H(+)(out). In terms of biological role, NDH shuttles electrons from NAD(P)H:plastoquinone, via FMN and iron-sulfur (Fe-S) centers, to quinones in the photosynthetic chain and possibly in a chloroplast respiratory chain. The immediate electron acceptor for the enzyme in this species is believed to be plastoquinone. Couples the redox reaction to proton translocation, and thus conserves the redox energy in a proton gradient. The sequence is that of NAD(P)H-quinone oxidoreductase subunit 1, chloroplastic from Solanum bulbocastanum (Wild potato).